The primary structure comprises 326 residues: Metallophosphoesterase domain-containing protein 1 (326 aa).

It belongs to the UPF0046 family. Expressed predominantly in adult brain.

In terms of biological role, may have metallophosphoesterase activity (in vitro). The polypeptide is Metallophosphoesterase domain-containing protein 1 (MPPED1) (Homo sapiens (Human)).